The chain runs to 227 residues: MICOS complex subunit MIC19 (227 aa).

Residue Gly-2 is the site of N-myristoyl glycine attachment. Position 29 is a phosphoserine (Ser-29). The tract at residues 34-60 (DRMKETSPSGPKSQRYSGTYGASVSDE) is disordered. Residues 39 to 55 (TSPSGPKSQRYSGTYGA) show a composition bias toward polar residues. At Tyr-49 the chain carries Phosphotyrosine. Phosphoserine is present on residues Ser-50, Ser-56, and Ser-58. An N6-acetyllysine modification is found at Lys-142. Residues 180-222 (HPVCADLQAQILQCYRQNTQQTLSCSALASQYMRCVNQAKQST) enclose the CHCH domain. 2 short sequence motifs (cx9C motif) span residues 183–193 (CADLQAQILQC) and 204–214 (CSALASQYMRC). Disulfide bonds link Cys-183–Cys-214 and Cys-193–Cys-204.

Belongs to the MICOS complex subunit Mic19 family. Metazoan Mic19 subfamily. In terms of assembly, component of the mitochondrial contact site and cristae organizing system (MICOS) complex, composed of at least MICOS10/MIC10, CHCHD3/MIC19, CHCHD6/MIC25, APOOL/MIC27, IMMT/MIC60, APOO/MIC23/MIC26 and MICOS13/MIC13. This complex was also known under the names MINOS or MitOS complex. The MICOS complex associates with mitochondrial outer membrane proteins SAMM50, MTX1 and MTX2 (together described as components of the mitochondrial outer membrane sorting assembly machinery (SAM) complex) and DNAJC11, mitochondrial inner membrane protein TMEM11 and with HSPA9. The MICOS and SAM complexes together with DNAJC11 are part of a large protein complex spanning both membranes termed the mitochondrial intermembrane space bridging (MIB) complex. Interacts with HSPA1A/HSPA1B and OPA1, preferentially with the soluble OPA1 form. Interacts with IMMT/MIC60.

Its subcellular location is the mitochondrion inner membrane. The protein localises to the cytoplasm. It localises to the nucleus. The protein resides in the mitochondrion. Component of the MICOS complex, a large protein complex of the mitochondrial inner membrane that plays crucial roles in the maintenance of crista junctions, inner membrane architecture, and formation of contact sites to the outer membrane. Has also been shown to function as a transcription factor which binds to the BAG1 promoter and represses BAG1 transcription. Plays an important role in the maintenance of the MICOS complex stability and the mitochondrial cristae morphology. In Bos taurus (Bovine), this protein is MICOS complex subunit MIC19 (CHCHD3).